We begin with the raw amino-acid sequence, 509 residues long: Protein root UVB sensitive 5 (509 aa).

A disordered region spans residues 22–49 (CQPKRRRVEHLRCSAQPSSIREDDEDAD).

The protein belongs to the RUS1 family.

This chain is Protein root UVB sensitive 5, found in Arabidopsis thaliana (Mouse-ear cress).